The chain runs to 189 residues: UPF0301 protein RT0098 (189 aa).

The protein belongs to the UPF0301 (AlgH) family.

The polypeptide is UPF0301 protein RT0098 (Rickettsia typhi (strain ATCC VR-144 / Wilmington)).